The following is a 63-amino-acid chain: Glutamine synthetase translation inhibitor (63 aa).

Its function is as follows. Inhibits the synthesis of glutamine synthetase II. The polypeptide is Glutamine synthetase translation inhibitor (gstI) (Rhizobium leguminosarum).